The sequence spans 148 residues: RxLR effector protein SFI7 (148 aa).

An N-terminal signal peptide occupies residues 1–22 (MRAYFVLLVAATAILTYGGATA). N-linked (GlcNAc...) asparagine glycosylation occurs at N32. The short motif at 44-58 (RSLRVAPSGGNGEER) is the RxLR-dEER element.

Belongs to the RxLR effector family.

It is found in the secreted. Its subcellular location is the host cytoplasm. The protein resides in the host cell membrane. Its function is as follows. Effector that suppresses flg22-induced post-translational MAP kinase activation in tomato but not in Arabidopsis. The perception of highly conserved pathogen- or microbe-associated molecular patterns (PAMPs/MAMPs), such as flg22, triggers converging signaling pathways recruiting MAP kinase cascades and inducing transcriptional re-programming, yielding a generic antimicrobial response. Also partially attenuates INF1-triggered cell death. This chain is RxLR effector protein SFI7, found in Phytophthora infestans (strain T30-4) (Potato late blight agent).